Consider the following 1903-residue polypeptide: Plexin-A4 (1903 aa).

An N-terminal signal peptide occupies residues 1–26 (MAFHNRRWNFTFSCCVVVLLLPLVAA). The 489-residue stretch at 27–515 (RPQQPSAATR…SESQLTRVPV (489 aa)) folds into the Sema domain. Residues 27 to 1246 (RPQQPSAATR…ITSDSPLSST (1220 aa)) lie on the Extracellular side of the membrane. Disulfide bonds link Cys97-Cys106 and Cys132-Cys140. Asn166 carries an N-linked (GlcNAc...) asparagine glycan. Disulfide bonds link Cys291–Cys413, Cys307–Cys364, and Cys382–Cys401. Asn450 carries an N-linked (GlcNAc...) asparagine glycan. The PSI 1 domain occupies 517-567 (ACEQYSSCNECLGSGDPHCGWCVLHSMCTRKEKCERSSEPRRFASNIKQCV). 4 disulfide bridges follow: Cys518/Cys535, Cys524/Cys566, Cys527/Cys544, and Cys538/Cys550. Asn575 and Asn600 each carry an N-linked (GlcNAc...) asparagine glycan. Cys601 and Cys620 are joined by a disulfide. N-linked (GlcNAc...) asparagine glycans are attached at residues Asn656, Asn663, Asn764, and Asn772. Residues 663–710 (NCSVHKSCLSCVGSPYQCHWCKYRHTCTHDPSSCSFQEGRVKQPEECP) enclose the PSI 2 domain. The PSI 3 domain occupies 811-864 (KCDARRESCGLCLKADPLFGCVWCKGENRCSLKQHCSYPQSMWLEHNGINSKCT). IPT/TIG domains follow at residues 866 to 960 (PRIT…YYFV), 962 to 1046 (PQLL…FEYV), 1049 to 1148 (PTIT…FVYY), and 1151 to 1246 (PVFE…LSST). 6 N-linked (GlcNAc...) asparagine glycosylation sites follow: Asn981, Asn992, Asn1025, Asn1141, Asn1189, and Asn1214. A helical membrane pass occupies residues 1247 to 1267 (AVISIAGAGGLLIFFIVIVLI). The Cytoplasmic segment spans residues 1268 to 1903 (AYKRKSRESD…QVVAFMSLES (636 aa)).

It belongs to the plexin family.

The protein resides in the cell membrane. Its function is as follows. Involved in the development of primary sensory neurons especially in branching of the peripheral axons. Interacts with the SLIT2 signaling specifically to promote axonal branching of Rohon-Beard neurons and the trigeminal sensory ganglion neurons. This is Plexin-A4 (plxna4) from Danio rerio (Zebrafish).